The primary structure comprises 73 residues: uncharacterized protein (73 aa).

This is an uncharacterized protein from Vertebrata (FPV).